The primary structure comprises 262 residues: Pyridoxine 5'-phosphate synthase (262 aa).

Asn-6 contacts 3-amino-2-oxopropyl phosphate. A 1-deoxy-D-xylulose 5-phosphate-binding site is contributed by 8–9 (DH). A 3-amino-2-oxopropyl phosphate-binding site is contributed by Arg-17. Catalysis depends on His-43, which acts as the Proton acceptor. Residues Arg-45 and His-50 each coordinate 1-deoxy-D-xylulose 5-phosphate. The active-site Proton acceptor is the Glu-70. A 1-deoxy-D-xylulose 5-phosphate-binding site is contributed by Thr-102. Residue His-215 is the Proton donor of the active site. Residues Gly-216 and 237 to 238 (GH) each bind 3-amino-2-oxopropyl phosphate.

The protein belongs to the PNP synthase family. Homooctamer; tetramer of dimers.

The protein resides in the cytoplasm. It carries out the reaction 3-amino-2-oxopropyl phosphate + 1-deoxy-D-xylulose 5-phosphate = pyridoxine 5'-phosphate + phosphate + 2 H2O + H(+). It functions in the pathway cofactor biosynthesis; pyridoxine 5'-phosphate biosynthesis; pyridoxine 5'-phosphate from D-erythrose 4-phosphate: step 5/5. Functionally, catalyzes the complicated ring closure reaction between the two acyclic compounds 1-deoxy-D-xylulose-5-phosphate (DXP) and 3-amino-2-oxopropyl phosphate (1-amino-acetone-3-phosphate or AAP) to form pyridoxine 5'-phosphate (PNP) and inorganic phosphate. The protein is Pyridoxine 5'-phosphate synthase of Helicobacter pylori (strain J99 / ATCC 700824) (Campylobacter pylori J99).